Consider the following 217-residue polypeptide: 3-oxo-tetronate 4-phosphate decarboxylase (217 aa).

H93 and H95 together coordinate Zn(2+). Catalysis depends on Y120, which acts as the Proton donor.

The protein belongs to the aldolase class II family. AraD/FucA subfamily. Zn(2+) serves as cofactor.

It carries out the reaction 3-dehydro-4-O-phospho-D-erythronate + H(+) = dihydroxyacetone phosphate + CO2. The catalysed reaction is 3-dehydro-4-O-phospho-L-erythronate + H(+) = dihydroxyacetone phosphate + CO2. Functionally, catalyzes the decarboxylation of 3-oxo-tetronate 4-phosphate to dihydroxyacetone phosphate (DHAP) and CO(2). This is 3-oxo-tetronate 4-phosphate decarboxylase from Cupriavidus necator (strain ATCC 17699 / DSM 428 / KCTC 22496 / NCIMB 10442 / H16 / Stanier 337) (Ralstonia eutropha).